An 837-amino-acid polypeptide reads, in one-letter code: V-type proton ATPase 116 kDa subunit a 1 (837 aa).

Topologically, residues 1 to 388 are cytoplasmic; it reads MGELFRSEEM…DAYGIGSYRE (388 aa). Residues 389–407 traverse the membrane as a helical segment; sequence INPAPYTIITFPFLFAVMF. The Vacuolar portion of the chain corresponds to 408-409; that stretch reads GD. Residues 410 to 426 form a helical membrane-spanning segment; it reads FGHGILMTLFAVWMVVR. The Cytoplasmic portion of the chain corresponds to 427-441; the sequence is ESRILSQKIDNELFT. A helical transmembrane segment spans residues 442–471; sequence MMFSGRYIILLMGLFSIYTGLIYNDCFSKA. Over 472 to 534 the chain is Vacuolar; it reads LNLFGSSWSV…ATNKLTFLNS (63 aa). A helical membrane pass occupies residues 535–554; sequence FKMKMSVVLGIIHMTFGVAL. The Cytoplasmic portion of the chain corresponds to 555 to 572; it reads SLLNHIYFKKPLNIYLGF. Residues 573–593 traverse the membrane as a helical segment; sequence IPEMIFMTTLFGYLVILIIYK. The Vacuolar portion of the chain corresponds to 594–638; sequence WCAYDASTSMVAPSLLIHFINMFLFSYQDTSLPMLYKGQMGLQCF. Residues 639-658 traverse the membrane as a helical segment; that stretch reads LVVCAIICVPWMLVVKPLIL. Topologically, residues 659–724 are cytoplasmic; the sequence is RRQYLRRKHL…DTVVHQAIHT (66 aa). Residues 725–749 traverse the membrane as a helical segment; it reads IEYCLGCISNTASYLRLWALSLAHA. The Vacuolar segment spans residues 750-770; it reads QLSEVLWTMVMHVGLSIRSLG. Residues 771-809 form a helical membrane-spanning segment; it reads GGIALVFVFSAFATLTIAILLIMEGLSAFLHALRLHWVE. The Cytoplasmic segment spans residues 810-837; sequence FQNKFYMGTGFKFLPFSFENIREGKFDE.

Belongs to the V-ATPase 116 kDa subunit family. V-ATPase is a heteromultimeric enzyme made up of two complexes: the ATP-hydrolytic V1 complex and the proton translocation V0 complex. The V1 complex consists of three catalytic AB heterodimers that form a heterohexamer, three peripheral stalks each consisting of EG heterodimers, one central rotor including subunits D and F, and the regulatory subunits C and H. The proton translocation complex V0 consists of the proton transport subunit a, a ring of proteolipid subunits c9c'', rotary subunit d, subunits e and f, and two accessory subunits.

It localises to the cytoplasmic vesicle. The protein localises to the clathrin-coated vesicle membrane. Its subcellular location is the secretory vesicle. It is found in the synaptic vesicle membrane. The protein resides in the melanosome. Subunit of the V0 complex of vacuolar(H+)-ATPase (V-ATPase), a multisubunit enzyme composed of a peripheral complex (V1) that hydrolyzes ATP and a membrane integral complex (V0) that translocates protons. V-ATPase is responsible for acidifying and maintaining the pH of intracellular compartments and in some cell types, is targeted to the plasma membrane, where it is responsible for acidifying the extracellular environment. Required for assembly and activity of the vacuolar ATPase. The sequence is that of V-type proton ATPase 116 kDa subunit a 1 (atp6v0a1) from Xenopus tropicalis (Western clawed frog).